Reading from the N-terminus, the 419-residue chain is L-rhamnose isomerase (419 aa).

Mn(2+) is bound by residues His-262, Asp-294, and Asp-296.

It belongs to the rhamnose isomerase family. Homotetramer. Mn(2+) is required as a cofactor.

It localises to the cytoplasm. The catalysed reaction is L-rhamnopyranose = L-rhamnulose. The protein operates within carbohydrate degradation; L-rhamnose degradation; glycerone phosphate from L-rhamnose: step 1/3. Functionally, catalyzes the interconversion of L-rhamnose and L-rhamnulose. The sequence is that of L-rhamnose isomerase from Salmonella agona (strain SL483).